Reading from the N-terminus, the 479-residue chain is Phosphatidylinositol 4-kinase type 2-alpha (479 aa).

At Met-1 the chain carries N-acetylmethionine. Residues 1-74 (MDETSPLVSP…ARGAAAQGQT (74 aa)) form a disordered region. Phosphoserine occurs at positions 5, 9, 44, 47, and 51. Positions 31-45 (VPGGAVRVAAAAGSG) are enriched in low complexity. Over residues 53 to 66 (GHDRERQPLLDRAR) the composition is skewed to basic and acidic residues. The PI3K/PI4K catalytic domain maps to 124 to 453 (CIFPERIYQG…VQMPPVIVET (330 aa)). The G-loop stretch occupies residues 130–136 (IYQGSSG). ATP is bound by residues 131 to 137 (YQGSSGS) and Lys-152. Positions 157 to 159 (EPY) are important for substrate binding. Residues 165 to 178 (KWTKWLQKLCCPCC) are important for interaction with membranes. 4 S-palmitoyl cysteine lipidation sites follow: Cys-174, Cys-175, Cys-177, and Cys-178. 261–264 (QLFV) contacts ATP. Residues 268 to 276 (KDADYWLRR) form an important for interaction with membranes region. Positions 305–313 (RNTDRGNDN) are catalytic loop. Residues 344–364 (AIDNGLAFPLKHPDSWRAYPF) are activation loop. An ATP-binding site is contributed by Asp-346. Residues 359-368 (WRAYPFYWAW) are important for interaction with membranes. Ser-462 is subject to Phosphoserine.

Belongs to the PI3/PI4-kinase family. Type II PI4K subfamily. In terms of assembly, associates with the BLOC-1 and the AP-3 complexes; the BLOC-1 complex is required for optimal binding of PI4K2A to the AP-3 complex. Interacts with BLOC1S5 and DTNBP1. Interacts with FOS; this interaction may enhance phosphatidylinositol phosphorylation activity. Interacts with ITCH. Interacts with ATG9A. Post-translationally, palmitoylated by ZDHHC3 and ZDHHC7 in the CCPCC motif. Palmitoylation is cholesterol-dependent, and required for TGN localization. Ubiquitinated by ITCH; this does not lead to proteasomal degradation. As to expression, widely expressed. Highest expression is observed in kidney, brain, heart, skeletal muscle, and placenta and lowest expression is observed in colon, thymus, and small intestine.

It localises to the golgi apparatus. It is found in the trans-Golgi network membrane. Its subcellular location is the membrane raft. The protein resides in the cell projection. The protein localises to the dendrite. It localises to the presynaptic cell membrane. It is found in the synapse. Its subcellular location is the synaptosome. The protein resides in the mitochondrion. The protein localises to the endosome. It localises to the endosome membrane. It is found in the cytoplasmic vesicle. Its subcellular location is the membrane. The protein resides in the cell membrane. The protein localises to the perikaryon. It localises to the neuron projection. The catalysed reaction is a 1,2-diacyl-sn-glycero-3-phospho-(1D-myo-inositol) + ATP = a 1,2-diacyl-sn-glycero-3-phospho-(1D-myo-inositol 4-phosphate) + ADP + H(+). In terms of biological role, membrane-bound phosphatidylinositol-4 kinase (PI4-kinase) that catalyzes the phosphorylation of phosphatidylinositol (PI) to phosphatidylinositol 4-phosphate (PI4P), a lipid that plays important roles in endocytosis, Golgi function, protein sorting and membrane trafficking and is required for prolonged survival of neurons. Besides, phosphorylation of phosphatidylinositol (PI) to phosphatidylinositol 4-phosphate (PI4P) is the first committed step in the generation of phosphatidylinositol 4,5-bisphosphate (PIP2), a precursor of the second messenger inositol 1,4,5-trisphosphate (InsP3). The protein is Phosphatidylinositol 4-kinase type 2-alpha (PI4K2A) of Homo sapiens (Human).